Consider the following 559-residue polypeptide: Formate--tetrahydrofolate ligase (559 aa).

68–75 serves as a coordination point for ATP; sequence TPAGEGKT.

It belongs to the formate--tetrahydrofolate ligase family.

It carries out the reaction (6S)-5,6,7,8-tetrahydrofolate + formate + ATP = (6R)-10-formyltetrahydrofolate + ADP + phosphate. It functions in the pathway one-carbon metabolism; tetrahydrofolate interconversion. In Rhizobium etli (strain ATCC 51251 / DSM 11541 / JCM 21823 / NBRC 15573 / CFN 42), this protein is Formate--tetrahydrofolate ligase.